A 680-amino-acid polypeptide reads, in one-letter code: DNA-directed RNA polymerase subunit beta' (680 aa).

Zn(2+) contacts are provided by Cys-69, Cys-71, Cys-87, and Cys-90. The Mg(2+) site is built by Asp-489, Asp-491, and Asp-493.

This sequence belongs to the RNA polymerase beta' chain family. RpoC1 subfamily. In terms of assembly, in plastids the minimal PEP RNA polymerase catalytic core is composed of four subunits: alpha, beta, beta', and beta''. When a (nuclear-encoded) sigma factor is associated with the core the holoenzyme is formed, which can initiate transcription. Mg(2+) is required as a cofactor. Requires Zn(2+) as cofactor.

The protein resides in the plastid. Its subcellular location is the chloroplast. The enzyme catalyses RNA(n) + a ribonucleoside 5'-triphosphate = RNA(n+1) + diphosphate. DNA-dependent RNA polymerase catalyzes the transcription of DNA into RNA using the four ribonucleoside triphosphates as substrates. The sequence is that of DNA-directed RNA polymerase subunit beta' from Aethionema cordifolium (Lebanon stonecress).